The chain runs to 224 residues: E3 ubiquitin-protein ligase TRIM48 (224 aa).

An RING-type zinc finger spans residues 31–72; the sequence is CPICMNYFIDPVTIDCGHSFCRPCFYLNWQDIPILTQCFECI. The B box-type zinc-finger motif lies at 104-145; sequence SEEQMCGIHRETKKMFCEVDRSLLCLLCSSSQEHRYHRHCPA. The Zn(2+) site is built by cysteine 109, histidine 112, cysteine 131, and histidine 137.

It belongs to the TRIM/RBCC family. Interacts with PRMT1; the interaction leads to ubiquitination of PRMT1 by TRIM48. Interacts with MAP3K5. Interacts with STRAP.

It is found in the cytoplasm. The protein resides in the cytosol. It carries out the reaction S-ubiquitinyl-[E2 ubiquitin-conjugating enzyme]-L-cysteine + [acceptor protein]-L-lysine = [E2 ubiquitin-conjugating enzyme]-L-cysteine + N(6)-ubiquitinyl-[acceptor protein]-L-lysine.. Its function is as follows. E3 ubiquitin-protein ligase which promotes K48-linked polyubiquitination of protein methyltransferase PRMT1, leading to PRMT1 degradation. This suppresses methylation of the PRMT1 substrate MAP3K5/ASK1, promoting its activation and increasing MAP3K5-dependent cell death induced by oxidative stress. TRIM48-mediated ubiquitination of PRMT1 also suppresses methylation of FOXO1 by PRMT1, leading to inhibition of FOXO1 transcriptional activity. The chain is E3 ubiquitin-protein ligase TRIM48 from Homo sapiens (Human).